We begin with the raw amino-acid sequence, 263 residues long: Small ribosomal subunit protein uS2 (263 aa).

Belongs to the universal ribosomal protein uS2 family.

In Roseiflexus castenholzii (strain DSM 13941 / HLO8), this protein is Small ribosomal subunit protein uS2.